A 228-amino-acid chain; its full sequence is Prolactin-2B1 (228 aa).

Residues 1 to 31 form the signal peptide; sequence MLLYLPQIFSSRASSLLFLVPYLLFWENVAS. 2 disulfides stabilise this stretch: Cys89/Cys194 and Cys203/Cys228. Asn173 carries N-linked (GlcNAc...) asparagine glycosylation.

It belongs to the somatotropin/prolactin family. Expression restricted to the placenta in trophoblast cells within the labyrinth zone.

Its subcellular location is the secreted. This is Prolactin-2B1 (Prl2b1) from Rattus norvegicus (Rat).